We begin with the raw amino-acid sequence, 71 residues long: UPF0434 protein Csal_1588 (71 aa).

It belongs to the UPF0434 family.

The protein is UPF0434 protein Csal_1588 of Chromohalobacter salexigens (strain ATCC BAA-138 / DSM 3043 / CIP 106854 / NCIMB 13768 / 1H11).